Here is a 452-residue protein sequence, read N- to C-terminus: tRNA modification GTPase MnmE (452 aa).

(6S)-5-formyl-5,6,7,8-tetrahydrofolate contacts are provided by arginine 28, glutamate 85, and lysine 124. A TrmE-type G domain is found at 220-378 (GMNVVLVGRP…LRTELLRAAG (159 aa)). K(+) is bound at residue asparagine 230. GTP contacts are provided by residues 230 to 235 (NVGKSS), 249 to 255 (TDVAGTT), 274 to 277 (DTAG), and 359 to 361 (SAR). Serine 234 lines the Mg(2+) pocket. Threonine 249, valine 251, and threonine 254 together coordinate K(+). Residue threonine 255 coordinates Mg(2+). Lysine 452 contributes to the (6S)-5-formyl-5,6,7,8-tetrahydrofolate binding site.

It belongs to the TRAFAC class TrmE-Era-EngA-EngB-Septin-like GTPase superfamily. TrmE GTPase family. In terms of assembly, homodimer. Heterotetramer of two MnmE and two MnmG subunits. Requires K(+) as cofactor.

The protein resides in the cytoplasm. Its function is as follows. Exhibits a very high intrinsic GTPase hydrolysis rate. Involved in the addition of a carboxymethylaminomethyl (cmnm) group at the wobble position (U34) of certain tRNAs, forming tRNA-cmnm(5)s(2)U34. The chain is tRNA modification GTPase MnmE from Azoarcus sp. (strain BH72).